Consider the following 1366-residue polypeptide: Collagen alpha-2(I) chain (1366 aa).

Residues 1-22 form the signal peptide; that stretch reads MLSFVDTRTLLLLAVTSCLATC. Glutamine 23 is modified (pyrrolidone carboxylic acid). Residues 23–79 constitute a propeptide, N-terminal propeptide; the sequence is QSLQEATARKGPTGDRGPRGERGPPGPPGRDGDDGIPGPPGPPGPPGPPGLGGNFAA. Residues 27–1131 form a disordered region; the sequence is EATARKGPTG…PRSPPSLRPK (1105 aa). Residues 34–44 are compositionally biased toward basic and acidic residues; the sequence is PTGDRGPRGER. Over residues 59–71 the composition is skewed to pro residues; the sequence is PGPPGPPGPPGPP. Residue lysine 84 is modified to Allysine. A compositionally biased stretch (gly residues) spans 84–94; that stretch reads KGVGLGPGPMG. Low complexity predominate over residues 95–132; that stretch reads LMGPRGPPGASGAPGPQGFQGPAGEPGEPGQTGPAGAR. Residues 141–155 show a composition bias toward basic and acidic residues; sequence AGEDGHPGKPGRPGE. Lysine 177 bears the 5-hydroxylysine; alternate mark. The O-linked (Gal...) hydroxylysine; alternate glycan is linked to lysine 177. 8 stretches are compositionally biased toward low complexity: residues 225-254, 279-293, 300-321, 330-345, 384-408, 423-434, 470-489, and 513-531; these read VGAP…SAGP, AGPR…VSGP, PGAN…AGAP, PGPV…RGIV, NGEA…RGLP, RGATGPAGVRGP, LPGI…RGEP, and AGLA…NGAQ. Residues 538 to 547 show a composition bias toward gly residues; it reads GVQGGKGEQG. Residues 594 to 611 are compositionally biased toward low complexity; the sequence is PGESGAAGPSGPIGSRGP. Gly residues predominate over residues 634–643; that stretch reads GASGPGGLPG. Low complexity-rich tracts occupy residues 668-690 and 717-737; these read NPGR…AGAT and VGPA…QPGA. Positions 738–747 are enriched in basic and acidic residues; the sequence is KGERGTKGPK. Low complexity predominate over residues 756–765; that stretch reads TGPIGSAGPS. The span at 775 to 784 shows a compositional bias: gly residues; the sequence is GSRGDGGPPG. 5 stretches are compositionally biased toward low complexity: residues 785-795, 863-876, 893-932, 951-974, and 981-1001; these read ATGFPGAAGRT, PQGL…LGLP, EPGP…NPGN, PGNI…PTGK, and PGPA…PSGP. Over residues 1005-1016 the composition is skewed to basic and acidic residues; that stretch reads RGDKGEPGEKGP. The segment covering 1089–1103 has biased composition (pro residues); it reads AGPPGPPGPPGPPGP. A propeptide spans 1120-1366 (C-terminal propeptide); the sequence is DQPRSPPSLR…RVDVGPVCFK (247 aa). A Fibrillar collagen NC1 domain is found at 1133-1366; sequence YEVDATLKSL…RVDVGPVCFK (234 aa). Cystine bridges form between cysteine 1163-cysteine 1195, cysteine 1203-cysteine 1364, and cysteine 1272-cysteine 1317. Residues aspartate 1181, asparagine 1183, glutamine 1184, cysteine 1186, and aspartate 1189 each contribute to the Ca(2+) site.

Belongs to the fibrillar collagen family. Trimers of one alpha 2(I) and two alpha 1(I) chains. Interacts (via C-terminus) with TMEM131 (via PapD-L domain); the interaction is direct and is involved in assembly and TRAPPIII ER-to-Golgi transport complex-dependent secretion of collagen. Post-translationally, prolines at the third position of the tripeptide repeating unit (G-X-Y) are hydroxylated in some or all of the chains. Forms the fibrils of tendon, ligaments and bones. In bones the fibrils are mineralized with calcium hydroxyapatite.

The protein resides in the secreted. The protein localises to the extracellular space. It localises to the extracellular matrix. Type I collagen is a member of group I collagen (fibrillar forming collagen). This chain is Collagen alpha-2(I) chain (COL1A2), found in Canis lupus familiaris (Dog).